The chain runs to 91 residues: Small ribosomal subunit protein uS19 (91 aa).

This sequence belongs to the universal ribosomal protein uS19 family.

In terms of biological role, protein S19 forms a complex with S13 that binds strongly to the 16S ribosomal RNA. This Methylobacillus flagellatus (strain ATCC 51484 / DSM 6875 / VKM B-1610 / KT) protein is Small ribosomal subunit protein uS19.